Here is a 296-residue protein sequence, read N- to C-terminus: Acetyl-coenzyme A carboxylase carboxyl transferase subunit beta (296 aa).

The CoA carboxyltransferase N-terminal domain occupies valine 26 to glutamate 295. Cysteine 30, cysteine 33, cysteine 49, and cysteine 52 together coordinate Zn(2+). A C4-type zinc finger spans residues cysteine 30–cysteine 52.

The protein belongs to the AccD/PCCB family. Acetyl-CoA carboxylase is a heterohexamer composed of biotin carboxyl carrier protein (AccB), biotin carboxylase (AccC) and two subunits each of ACCase subunit alpha (AccA) and ACCase subunit beta (AccD). Requires Zn(2+) as cofactor.

It localises to the cytoplasm. It catalyses the reaction N(6)-carboxybiotinyl-L-lysyl-[protein] + acetyl-CoA = N(6)-biotinyl-L-lysyl-[protein] + malonyl-CoA. It participates in lipid metabolism; malonyl-CoA biosynthesis; malonyl-CoA from acetyl-CoA: step 1/1. In terms of biological role, component of the acetyl coenzyme A carboxylase (ACC) complex. Biotin carboxylase (BC) catalyzes the carboxylation of biotin on its carrier protein (BCCP) and then the CO(2) group is transferred by the transcarboxylase to acetyl-CoA to form malonyl-CoA. The polypeptide is Acetyl-coenzyme A carboxylase carboxyl transferase subunit beta (Haemophilus ducreyi (strain 35000HP / ATCC 700724)).